The following is a 282-amino-acid chain: Phycocyanobilin lyase subunit beta (282 aa).

It belongs to the CpcE/RpcE/PecE family. In terms of assembly, cpcE and CpcF associate to form a lyase.

Required for the chromophorylation of the CpcA gene product. The protein is Phycocyanobilin lyase subunit beta (cpcF1) of Pseudanabaena tenuis (strain PCC 7409).